Here is a 174-residue protein sequence, read N- to C-terminus: Shikimate kinase 2 (174 aa).

G12 to T17 lines the ATP pocket. 2 residues coordinate Mg(2+): T16 and D32. Positions 34, 58, and 79 each coordinate substrate. The segment at Q112–K126 is LID domain. R120 contributes to the ATP binding site. R139 contacts substrate.

Belongs to the shikimate kinase family. AroL subfamily. In terms of assembly, monomer. Requires Mg(2+) as cofactor.

It is found in the cytoplasm. The enzyme catalyses shikimate + ATP = 3-phosphoshikimate + ADP + H(+). Its pathway is metabolic intermediate biosynthesis; chorismate biosynthesis; chorismate from D-erythrose 4-phosphate and phosphoenolpyruvate: step 5/7. Functionally, catalyzes the specific phosphorylation of the 3-hydroxyl group of shikimic acid using ATP as a cosubstrate. The polypeptide is Shikimate kinase 2 (Escherichia coli O81 (strain ED1a)).